The following is a 365-amino-acid chain: Prostaglandin E2 receptor EP3 subtype (365 aa).

The tract at residues 1–22 (MASMWAPEHSAEAHSNLSSTTD) is disordered. The Extracellular segment spans residues 1 to 30 (MASMWAPEHSAEAHSNLSSTTDDCGSVSVA). A compositionally biased stretch (polar residues) spans 13 to 22 (AHSNLSSTTD). An N-linked (GlcNAc...) asparagine glycan is attached at Asn-16. Residues 31-55 (FPITMMVTGFVGNALAMLLVSRSYR) traverse the membrane as a helical segment. The Cytoplasmic portion of the chain corresponds to 56 to 68 (RRESKRKKSFLLC). A helical transmembrane segment spans residues 69-89 (IGWLALTDLVGQLLTSPVVIL). Residues 90 to 108 (VYLSQRRWEQLDPSGRLCT) lie on the Extracellular side of the membrane. Residues Cys-107 and Cys-184 are joined by a disulfide bond. A helical transmembrane segment spans residues 109–130 (FFGLTMTVFGLSSLLVASAMAV). Topologically, residues 131 to 151 (ERALAIRAPHWYASHMKTRAT) are cytoplasmic. The chain crosses the membrane as a helical span at residues 152–173 (PVLLGVWLSVLAFALLPVLGVG). The Extracellular portion of the chain corresponds to 174–203 (RYSVQWPGTWCFISTGPAGNETDPAREPGS). Asn-193 is a glycosylation site (N-linked (GlcNAc...) asparagine). The helical transmembrane segment at 204–229 (VAFASAFACLGLLALVVTFACNLATI) threads the bilayer. The Cytoplasmic portion of the chain corresponds to 230-259 (KALVSRCRAKAAVSQSSAQWGRITTETAIQ). A helical membrane pass occupies residues 260–283 (LMGIMCVLSVCWSPLLIMMLKMIF). Residues 284–303 (NQMSVEQCKTQMGKEKECNS) are Extracellular-facing. Residues 304–325 (FLIAVRLASLNQILDPWVYLLL) traverse the membrane as a helical segment. Topologically, residues 326 to 365 (RKILLRKFCQIRDHTNYASSSTSLPCPGSSALMWSDQLER) are cytoplasmic.

It belongs to the G-protein coupled receptor 1 family. In terms of assembly, interacts (via C-terminus) with MKLN1. In terms of processing, ligand binding is affected by cAMP-dependent phosphorylation in brain membranes. Detected in platelets. Kidney, uterus, and mastocytoma cells, and in a lesser amount in brain, thymus, lung, heart, stomach and spleen.

The protein localises to the cell membrane. Functionally, receptor for prostaglandin E2 (PGE2). Required for normal development of fever in response to pyrinogens, including IL1B, prostaglandin E2 and bacterial lipopolysaccharide (LPS). Required for normal potentiation of platelet aggregation by prostaglandin E2, and thus plays a role in the regulation of blood coagulation. Required for increased HCO3(-) secretion in the duodenum in response to mucosal acidification, and thereby contributes to the protection of the mucosa against acid-induced ulceration. Not required for normal kidney function, normal urine volume and osmolality. Receptor for prostaglandin E2 (PGE2); ligand binding activates a signaling cascade via G(i) proteins that leads to inhibition of adenylate cyclase. Shows high agonist-independent constitutive inhibition of adenylate cyclase. In terms of biological role, receptor for prostaglandin E2 (PGE2); ligand binding activates a signaling cascade via G(i) proteins that leads to inhibition of adenylate cyclase. Requires much higher ligand concentrations than isoform Alpha for activation. Does not display agonist-independent constitutive inhibition of adenylate cyclase. Its function is as follows. Receptor for prostaglandin E2 (PGE2); ligand binding can activate several distinct signaling cascades, resulting in activation or inhibition of adenylate cyclase. This Mus musculus (Mouse) protein is Prostaglandin E2 receptor EP3 subtype (Ptger3).